Reading from the N-terminus, the 836-residue chain is MLNKEEIIVPKNLEEEMKESYLRYSMSVIISRALPDARDGLKPSQRRILYAMKQLNLTPGVKHRKCAKICGDTSGDYHPHGESVIYPTLVRMAQDWAMRYPLVDGQGNFGSIDGDPAAAMRYTEARLTHSAIFLLEDLDKDTVDMVPNYDETKYEPVVFPSKFPNLLCNGSSGIAVGMATNIPPHNLGELIEATLLVLANSQTSIEDILEVMPGPDFPTGGIICGTEGIRSTYYTGRGKLRLRARMHVEENSDKQRENIILTEMPYNVNKSRLIEQIAELINEKTLTGISDVRDESDKDGIRVVLELKKGESSEVVINRLYKFTDVQVTFGANMLALDKNLPRTMNIHRMISAWIRHRMDVIQRRTRYELNKAEARAHILEGFLKALSCMDEVVKTIRESSNKEHAKQQLVELFSFSEAQALAILELRLYQLTGLEADKVQKEYSELLEKITYYRKVLAEEELVKDIIREELQELHKVHKTPRRTRIEMDAGDVRDIEDIISDESVIITISGDDYVKRMPVKVFREQKRGGQGVTGFDMKKGSDFLKAVYSASTKDYLLIFTNFGQCYWLKVWRLPEGERRAKGKPIINFLEGIRPGEQVAAVLNVKRFEQGEYLFLATKKGVVKKVSLDAFGSPRKKGIRALEIDDGDELIAARHIANDEEKVMLFTRLGMAVRFPHDKVRPMGRAARGVRGVSLKNEQDFVVSCQVVTEDQSVLVVCDNGFGKRSLVCDFRETNRGSVGVRSIVINQRNGDVLGAISVTDCDSILLMSAQGQAIRINMQDVRVMGRATQGVRLVNLREGDTLVAMEKLSINTESVETEENLAASVQSGQDTIEE.

Residues 34–500 (LPDARDGLKP…AGDVRDIEDI (467 aa)) form the Topo IIA-type catalytic domain. Tyr-122 functions as the O-(5'-phospho-DNA)-tyrosine intermediate in the catalytic mechanism. The short motif at 527 to 533 (QKRGGQG) is the GyrA-box element.

The protein belongs to the type II topoisomerase GyrA/ParC subunit family. Heterotetramer, composed of two GyrA and two GyrB chains. In the heterotetramer, GyrA contains the active site tyrosine that forms a transient covalent intermediate with DNA, while GyrB binds cofactors and catalyzes ATP hydrolysis.

The protein resides in the cytoplasm. It carries out the reaction ATP-dependent breakage, passage and rejoining of double-stranded DNA.. A type II topoisomerase that negatively supercoils closed circular double-stranded (ds) DNA in an ATP-dependent manner to modulate DNA topology and maintain chromosomes in an underwound state. Negative supercoiling favors strand separation, and DNA replication, transcription, recombination and repair, all of which involve strand separation. Also able to catalyze the interconversion of other topological isomers of dsDNA rings, including catenanes and knotted rings. Type II topoisomerases break and join 2 DNA strands simultaneously in an ATP-dependent manner. This Chlamydia trachomatis serovar D (strain ATCC VR-885 / DSM 19411 / UW-3/Cx) protein is DNA gyrase subunit A.